We begin with the raw amino-acid sequence, 156 residues long: ATP synthase subunit b (156 aa).

Residues 7–26 form a helical membrane-spanning segment; that stretch reads FIGQMVAFAIFIYLTYRYVW.

This sequence belongs to the ATPase B chain family. F-type ATPases have 2 components, F(1) - the catalytic core - and F(0) - the membrane proton channel. F(1) has five subunits: alpha(3), beta(3), gamma(1), delta(1), epsilon(1). F(0) has three main subunits: a(1), b(2) and c(10-14). The alpha and beta chains form an alternating ring which encloses part of the gamma chain. F(1) is attached to F(0) by a central stalk formed by the gamma and epsilon chains, while a peripheral stalk is formed by the delta and b chains.

It localises to the cell inner membrane. Its function is as follows. F(1)F(0) ATP synthase produces ATP from ADP in the presence of a proton or sodium gradient. F-type ATPases consist of two structural domains, F(1) containing the extramembraneous catalytic core and F(0) containing the membrane proton channel, linked together by a central stalk and a peripheral stalk. During catalysis, ATP synthesis in the catalytic domain of F(1) is coupled via a rotary mechanism of the central stalk subunits to proton translocation. Component of the F(0) channel, it forms part of the peripheral stalk, linking F(1) to F(0). The chain is ATP synthase subunit b from Cellvibrio japonicus (strain Ueda107) (Pseudomonas fluorescens subsp. cellulosa).